The following is a 310-amino-acid chain: DNA repair nuclease APEX1 (310 aa).

The tract at residues 1–51 is disordered; it reads MPKRAKKNEEGVDGEADNGTAAAKKEKKGKEPEAPILYEDPPEKLTSKDGR. The segment covering 41-51 has biased composition (basic and acidic residues); that stretch reads PPEKLTSKDGR. Residues D63 and E89 each contribute to the Mg(2+) site. Residue Y164 is part of the active site. D203, N205, and D300 together coordinate Mg(2+). The Proton donor/acceptor role is filled by D203.

This sequence belongs to the DNA repair enzymes AP/ExoA family. Mg(2+) serves as cofactor. It depends on Mn(2+) as a cofactor.

Its subcellular location is the nucleus. The protein resides in the nucleolus. The protein localises to the nucleus speckle. It localises to the endoplasmic reticulum. It is found in the cytoplasm. Its subcellular location is the mitochondrion. It carries out the reaction Exonucleolytic cleavage in the 3'- to 5'-direction to yield nucleoside 5'-phosphates.. Functions as an apurinic/apyrimidinic (AP) endodeoxyribonuclease in the DNA base excision repair (BER) pathway of DNA lesions induced by oxidative and alkylating agents. Initiates repair of AP sites in DNA by catalyzing hydrolytic incision of the phosphodiester backbone immediately adjacent to the damage, generating a single-strand break with 5'-deoxyribose phosphate and 3'-hydroxyl ends. Has 3'-5' exoribonuclease activity on mismatched deoxyribonucleotides at the 3' termini of nicked or gapped DNA molecules during short-patch BER. May also play a role in the epigenetic regulation of gene expression by participating in DNA demethylation. Required for passage through the mid-blastula transition MBT. May also act as an endoribonuclease involved in the control of single-stranded RNA metabolism. Has no redox activity. Binds DNA and RNA. The chain is DNA repair nuclease APEX1 (apex1) from Danio rerio (Zebrafish).